We begin with the raw amino-acid sequence, 494 residues long: 3-octaprenyl-4-hydroxybenzoate carboxy-lyase (494 aa).

Asparagine 172 contacts Mn(2+). Prenylated FMN-binding positions include 175-177 (IYR), 189-191 (RWL), and 194-195 (RG). Glutamate 238 contacts Mn(2+). Aspartate 294 functions as the Proton donor in the catalytic mechanism.

Belongs to the UbiD family. In terms of assembly, homohexamer. The cofactor is prenylated FMN. It depends on Mn(2+) as a cofactor.

It is found in the cell membrane. The catalysed reaction is a 4-hydroxy-3-(all-trans-polyprenyl)benzoate + H(+) = a 2-(all-trans-polyprenyl)phenol + CO2. It functions in the pathway cofactor biosynthesis; ubiquinone biosynthesis. In terms of biological role, catalyzes the decarboxylation of 3-octaprenyl-4-hydroxy benzoate to 2-octaprenylphenol, an intermediate step in ubiquinone biosynthesis. This Albidiferax ferrireducens (strain ATCC BAA-621 / DSM 15236 / T118) (Rhodoferax ferrireducens) protein is 3-octaprenyl-4-hydroxybenzoate carboxy-lyase.